A 214-amino-acid polypeptide reads, in one-letter code: Cytochrome b (214 aa).

4 helical membrane passes run 31–51, 75–96, 111–131, and 176–196; these read FGSM…FLAI, WIMQ…YIHI, WLSG…GYVL, and FFAL…IHIL. Heme b is bound by residues His81 and His95. The heme b site is built by His180 and His194. His199 is an a ubiquinone binding site.

This sequence belongs to the cytochrome b family. As to quaternary structure, the cytochrome bc1 complex contains 3 respiratory subunits (MT-CYB, CYC1 and UQCRFS1), 2 core proteins (UQCRC1 and UQCRC2) and probably 6 low-molecular weight proteins. It depends on heme b as a cofactor.

Its subcellular location is the mitochondrion inner membrane. Its function is as follows. Component of the ubiquinol-cytochrome c reductase complex (complex III or cytochrome b-c1 complex) that is part of the mitochondrial respiratory chain. The b-c1 complex mediates electron transfer from ubiquinol to cytochrome c. Contributes to the generation of a proton gradient across the mitochondrial membrane that is then used for ATP synthesis. The protein is Cytochrome b (MT-CYB) of Bothrops bilineatus (Green jararaca).